The primary structure comprises 183 residues: UPF0397 protein EAT1b_2102 (183 aa).

5 consecutive transmembrane segments (helical) span residues 9–29, 42–62, 74–94, 117–137, and 147–167; these read IVAT…AAIP, AFLA…IGLI, SPWW…GLIA, AVVQ…LIYA, and GAVA…LLLV.

Belongs to the UPF0397 family.

Its subcellular location is the cell membrane. The polypeptide is UPF0397 protein EAT1b_2102 (Exiguobacterium sp. (strain ATCC BAA-1283 / AT1b)).